We begin with the raw amino-acid sequence, 479 residues long: MEKSLLFLFAVTLLSVGCTDAGESKGSIHKEKERSKRQALKHLTVTTIMEQPFSMKSESGMEGFCIDLLSELSQSLGFNYTIKEVKDGRYGAKDQDGNWNGMVGEVLRKEVDLAVAPLTITANRERELAFTKPFMQTGISILLRKEDASENSFLFGFLTPFSKETWIGILVAYMVTSLCLFLVGRLSPCEWTELSTEQNNFTFLNSLWFGAGAFTLQGAEPHPKSVSARIIAVIWWIFSIVLVAAYIASFAAFLNSDSVQTTNIQTFEDLVNQRTLEFGTINSSSTFQFFKNSKNPTYRMIYEYMDKRKDELLVKSFAEGVRRVRESNYAFLGESVMQDIMVAKHCELARAPQIIAGRGYGIAASIDSQLIKQLSIAILEQTESGNIEYLRKKWWDNTCSMKRSAGWNPVQPHTLGGIFLILGIGLALGVIAALIELVLKARNNADQQKKSCCSAFSEEMGERLGTNKENQGAVDSVKS.

The first 17 residues, 1–17 (MEKSLLFLFAVTLLSVG), serve as a signal peptide directing secretion. Residues 18-163 (CTDAGESKGS…LFGFLTPFSK (146 aa)) are Extracellular-facing. N-linked (GlcNAc...) asparagine glycosylation is present at Asn79. Residues 164 to 184 (ETWIGILVAYMVTSLCLFLVG) traverse the membrane as a helical segment. At 185 to 229 (RLSPCEWTELSTEQNNFTFLNSLWFGAGAFTLQGAEPHPKSVSAR) the chain is on the cytoplasmic side. The helical transmembrane segment at 230-250 (IIAVIWWIFSIVLVAAYIASF) threads the bilayer. Over 251–414 (AAFLNSDSVQ…AGWNPVQPHT (164 aa)) the chain is Extracellular. Asn282 carries an N-linked (GlcNAc...) asparagine glycan. Residues 415-435 (LGGIFLILGIGLALGVIAALI) traverse the membrane as a helical segment. Over 436–479 (ELVLKARNNADQQKKSCCSAFSEEMGERLGTNKENQGAVDSVKS) the chain is Cytoplasmic.

It belongs to the glutamate-gated ion channel (TC 1.A.10.1) family. Homomeric.

The protein resides in the cell membrane. It is found in the postsynaptic cell membrane. Functionally, receptor for glutamate. L-glutamate acts as an excitatory neurotransmitter at many synapses in the central nervous system. The postsynaptic actions of Glu are mediated by a variety of receptors that are named according to their selective agonists. This receptor binds domoate &gt; kainate &gt; AMPA &gt; NBQX &gt; glutamate. The polypeptide is Glutamate receptor U1 (kbp) (Xenopus laevis (African clawed frog)).